The chain runs to 217 residues: Probable GTP-binding protein EngB (217 aa).

The EngB-type G domain occupies 24-207 (SQPEICFAGR…HELIESWLIP (184 aa)). Residues 32–39 (GRSNAGKS), 59–63 (GRTQH), 81–84 (DLPG), 148–151 (TKCD), and 185–188 (LFSA) each bind GTP. Mg(2+)-binding residues include Ser39 and Thr61.

The protein belongs to the TRAFAC class TrmE-Era-EngA-EngB-Septin-like GTPase superfamily. EngB GTPase family. It depends on Mg(2+) as a cofactor.

In terms of biological role, necessary for normal cell division and for the maintenance of normal septation. The chain is Probable GTP-binding protein EngB from Paraburkholderia phytofirmans (strain DSM 17436 / LMG 22146 / PsJN) (Burkholderia phytofirmans).